The sequence spans 1051 residues: Inactive tyrosine-protein kinase 7 (1051 aa).

The first 22 residues, 1 to 22 (MAALRALLLLLAVGAQAAIRFA), serve as a signal peptide directing secretion. Ig-like C2-type domains are found at residues 23 to 105 (KEPY…ANAS), 115 to 204 (SVVL…DNFT), 213 to 298 (PQAV…KATL), 308 to 388 (PFSP…LSIT), 393 to 472 (PKWV…GSIE), 487 to 566 (PPPQ…ATVQ), and 573 to 661 (VTFK…AFLY). The Extracellular portion of the chain corresponds to 23–685 (KEPYSQDALH…SHTPYKMIQT (663 aa)). Cys-40 and Cys-88 are disulfide-bonded. Asn-103 is a glycosylation site (N-linked (GlcNAc...) asparagine). A disulfide bridge links Cys-137 with Cys-187. N-linked (GlcNAc...) asparagine glycosylation is found at Asn-202, Asn-255, and Asn-264. Cystine bridges form between Cys-234–Cys-282, Cys-326–Cys-372, Cys-414–Cys-462, Cys-505–Cys-551, and Cys-594–Cys-645. N-linked (GlcNAc...) asparagine glycans are attached at residues Asn-444, Asn-548, and Asn-627. The chain crosses the membrane as a helical span at residues 686–706 (IGLSVGAAVAYIIIVLGLMFY). Residues 707–1051 (CKKRRKAKRL…LGDSPADSKA (345 aa)) lie on the Cytoplasmic side of the membrane. In terms of domain architecture, Protein kinase; inactive spans 777 to 1048 (LQTITTLGRG…AAALGDSPAD (272 aa)).

This sequence belongs to the protein kinase superfamily. Tyr protein kinase family. Insulin receptor subfamily. Expressed in bone marrow, spleen, bursa, thymus and brain. Weakly expressed in fibroblasts. Also expressed in embryonic liver.

It is found in the membrane. Functionally, inactive tyrosine kinase involved in Wnt signaling. pathway. In Gallus gallus (Chicken), this protein is Inactive tyrosine-protein kinase 7 (PTK7).